Consider the following 110-residue polypeptide: Nucleoid-associated protein Sfum_2790 (110 aa).

Belongs to the YbaB/EbfC family. In terms of assembly, homodimer.

Its subcellular location is the cytoplasm. It localises to the nucleoid. Functionally, binds to DNA and alters its conformation. May be involved in regulation of gene expression, nucleoid organization and DNA protection. The sequence is that of Nucleoid-associated protein Sfum_2790 from Syntrophobacter fumaroxidans (strain DSM 10017 / MPOB).